The primary structure comprises 136 residues: Large ribosomal subunit protein uL16 (136 aa).

Belongs to the universal ribosomal protein uL16 family. As to quaternary structure, part of the 50S ribosomal subunit.

Its function is as follows. Binds 23S rRNA and is also seen to make contacts with the A and possibly P site tRNAs. The polypeptide is Large ribosomal subunit protein uL16 (Rickettsia felis (strain ATCC VR-1525 / URRWXCal2) (Rickettsia azadi)).